The sequence spans 104 residues: Phosphoribosyl-ATP pyrophosphatase (104 aa).

Belongs to the PRA-PH family.

The protein resides in the cytoplasm. It carries out the reaction 1-(5-phospho-beta-D-ribosyl)-ATP + H2O = 1-(5-phospho-beta-D-ribosyl)-5'-AMP + diphosphate + H(+). Its pathway is amino-acid biosynthesis; L-histidine biosynthesis; L-histidine from 5-phospho-alpha-D-ribose 1-diphosphate: step 2/9. This Methanoregula boonei (strain DSM 21154 / JCM 14090 / 6A8) protein is Phosphoribosyl-ATP pyrophosphatase.